The primary structure comprises 200 residues: Histone H1 (200 aa).

Residues 1-14 (MPPKKAPTTAKKAA) are compositionally biased toward low complexity. 2 disordered regions span residues 1–20 (MPPK…PTHT) and 78–200 (DFIQ…NKKA). Residues 18 to 93 (THTSYRDMIK…GTSGPVKLAK (76 aa)) enclose the H15 domain. Residues 94 to 116 (KQAPAKPAPKKPATTTKTAAPKK) show a composition bias toward low complexity. Residues 120 to 131 (KKADKAEKAEKP) show a composition bias toward basic and acidic residues. The span at 159 to 185 (TAAPAVVDKPKVVSVTKSGRKTTTTAK) shows a compositional bias: low complexity.

Belongs to the histone H1/H5 family.

Its subcellular location is the nucleus. The protein localises to the chromosome. Its function is as follows. Could act as an H1-type linker histone. This chain is Histone H1 (hhoA), found in Emericella nidulans (strain FGSC A4 / ATCC 38163 / CBS 112.46 / NRRL 194 / M139) (Aspergillus nidulans).